A 574-amino-acid polypeptide reads, in one-letter code: Ribonuclease Y (574 aa).

Residues 1–21 (MSLLDLVLLLLVLGLGGVLLL) traverse the membrane as a helical segment. In terms of domain architecture, KH spans 264–327 (AVTVVPIPSD…EIARMALEEL (64 aa)). Residues 390–483 (VLKHSIQVAH…VAAADALSAA (94 aa)) form the HD domain.

Belongs to the RNase Y family.

It localises to the cell membrane. Its function is as follows. Endoribonuclease that initiates mRNA decay. The protein is Ribonuclease Y of Thermus thermophilus (strain ATCC 27634 / DSM 579 / HB8).